The sequence spans 606 residues: Putative auxin response factor 21 (606 aa).

Positions 126–228 form a DNA-binding region, TF-B3; the sequence is FTKVLTASDT…ELRVGIRRAR (103 aa). A PB1 domain is found at 511 to 592; it reads RTCTKVQMQG…MVKKILIYSK (82 aa).

Belongs to the ARF family. Homodimers and heterodimers.

The protein localises to the nucleus. Auxin response factors (ARFs) are transcriptional factors that bind specifically to the DNA sequence 5'-TGTCTC-3' found in the auxin-responsive promoter elements (AuxREs). Could act as transcriptional activator or repressor. Formation of heterodimers with Aux/IAA proteins may alter their ability to modulate early auxin response genes expression. The polypeptide is Putative auxin response factor 21 (ARF21) (Arabidopsis thaliana (Mouse-ear cress)).